Reading from the N-terminus, the 145-residue chain is 3-dehydroquinate dehydratase (145 aa).

The Proton acceptor role is filled by Y23. Residues N75, H81, and D88 each contribute to the substrate site. The Proton donor role is filled by H101. Residues 102–103 (IS) and R112 contribute to the substrate site.

The protein belongs to the type-II 3-dehydroquinase family. As to quaternary structure, homododecamer.

The catalysed reaction is 3-dehydroquinate = 3-dehydroshikimate + H2O. It functions in the pathway metabolic intermediate biosynthesis; chorismate biosynthesis; chorismate from D-erythrose 4-phosphate and phosphoenolpyruvate: step 3/7. In terms of biological role, catalyzes a trans-dehydration via an enolate intermediate. This Caldicellulosiruptor bescii (strain ATCC BAA-1888 / DSM 6725 / KCTC 15123 / Z-1320) (Anaerocellum thermophilum) protein is 3-dehydroquinate dehydratase.